We begin with the raw amino-acid sequence, 102 residues long: Nucleoid-associated protein BCc_301 (102 aa).

It belongs to the YbaB/EbfC family. In terms of assembly, homodimer.

It localises to the cytoplasm. It is found in the nucleoid. Binds to DNA and alters its conformation. May be involved in regulation of gene expression, nucleoid organization and DNA protection. The chain is Nucleoid-associated protein BCc_301 from Buchnera aphidicola subsp. Cinara cedri (strain Cc).